The chain runs to 81 residues: MASVEEKVKQIIVEQLGVDEGEVTPNASFVDDLGADSLDTVELVMAFEEAFEIEIPDEDAEKIRTVKDAVDYITAHAKGGK.

The region spanning 2–77 is the Carrier domain; that stretch reads ASVEEKVKQI…DAVDYITAHA (76 aa). Serine 37 carries the O-(pantetheine 4'-phosphoryl)serine modification.

The protein belongs to the acyl carrier protein (ACP) family. In terms of processing, 4'-phosphopantetheine is transferred from CoA to a specific serine of apo-ACP by AcpS. This modification is essential for activity because fatty acids are bound in thioester linkage to the sulfhydryl of the prosthetic group.

It is found in the cytoplasm. Its pathway is lipid metabolism; fatty acid biosynthesis. Its function is as follows. Carrier of the growing fatty acid chain in fatty acid biosynthesis. This chain is Acyl carrier protein, found in Koribacter versatilis (strain Ellin345).